The following is a 128-amino-acid chain: UPF0102 protein KPN78578_35270 (128 aa).

The disordered stretch occupies residues Met-1–Asp-20.

The protein belongs to the UPF0102 family.

This is UPF0102 protein KPN78578_35270 from Klebsiella pneumoniae subsp. pneumoniae (strain ATCC 700721 / MGH 78578).